We begin with the raw amino-acid sequence, 847 residues long: Ras GTPase-activating protein 2 (847 aa).

Residues 1 to 18 are compositionally biased toward low complexity; the sequence is MAAAAPAAAALTEAPAVP. A disordered region spans residues 1-31; the sequence is MAAAAPAAAALTEAPAVPGTAEPETGDEDSR. Residue alanine 2 is modified to N-acetylalanine. 2 C2 domains span residues 19–137 and 148–288; these read GTAE…ETWF and VQGK…QAWY. The region spanning 371 to 588 is the Ras-GAP domain; it reads NKLVPFITAV…TDVKKFLDEI (218 aa). The residue at position 554 (serine 554) is a Phosphoserine. The PH domain occupies 603 to 704; the sequence is VHLKEGEMYK…WIDMLCRVSR (102 aa). The Btk-type zinc finger occupies 706 to 742; sequence NHNRLSSFHPSAYLNGNWLCCQETSEGTPGCKPCTAG. 4 residues coordinate Zn(2+): histidine 714, cysteine 725, cysteine 726, and cysteine 736. Residues 819–847 are disordered; that stretch reads DEPHEKYRKKRSSSAKYGSKENPIVGKIS.

Widely expressed. Higher expression in brain, placenta, and kidney.

The protein resides in the cell membrane. Functionally, inhibitory regulator of the Ras-cyclic AMP pathway. May bind inositol tetrakisphosphate (IP4) and phospholipids. The protein is Ras GTPase-activating protein 2 (Rasa2) of Rattus norvegicus (Rat).